A 563-amino-acid polypeptide reads, in one-letter code: Arginine--tRNA ligase (563 aa).

Residues 120–130 (PNIAKPFHVGH) carry the 'HIGH' region motif.

The protein belongs to the class-I aminoacyl-tRNA synthetase family. As to quaternary structure, monomer.

The protein localises to the cytoplasm. It carries out the reaction tRNA(Arg) + L-arginine + ATP = L-arginyl-tRNA(Arg) + AMP + diphosphate. The chain is Arginine--tRNA ligase from Clostridium beijerinckii (strain ATCC 51743 / NCIMB 8052) (Clostridium acetobutylicum).